A 108-amino-acid chain; its full sequence is MIRRPPAVVCYICGREYGTKSISIHEPQCLKKWHNENNLLPKELRRPVPKKPEVRTITAKGFYDLDALNEAAWTSAHSQLVPCNVCGRTFLPDRLIVHQRSCKPKAAK.

C2HC/C3H-type zinc fingers lie at residues 6–35 (PAVV…KWHN) and 79–108 (QLVP…KAAK). 8 residues coordinate Zn(2+): Cys10, Cys13, His25, Cys29, Cys83, Cys86, His98, and Cys102.

Zn(2+) serves as cofactor.

The sequence is that of Zinc finger protein 475 from Homo sapiens (Human).